The chain runs to 558 residues: Polypeptide N-acetylgalactosaminyltransferase 16 (558 aa).

Topologically, residues 1–6 (MRKIRA) are cytoplasmic. The helical; Signal-anchor for type II membrane protein transmembrane segment at 7-26 (NAIAILTVAWILGTFYYLWQ) threads the bilayer. Topologically, residues 27–558 (DNRAHAASSS…AQQWQLLPHT (532 aa)) are lumenal. A compositionally biased stretch (low complexity) spans 34–46 (SSSGRGAQRAGGR). The interval 34–53 (SSSGRGAQRAGGRPEQLRED) is disordered. 5 disulfides stabilise this stretch: Cys113/Cys340, Cys331/Cys409, Cys441/Cys460, Cys486/Cys506, and Cys530/Cys543. The interval 122-227 (LPATSVIITF…VEWLQPMLQR (106 aa)) is catalytic subdomain A. Residues Asp163 and Arg188 each contribute to the substrate site. Asp211 is a Mn(2+) binding site. Substrate is bound at residue Ser212. His213 is a binding site for Mn(2+). Positions 286-348 (PIRTPVIAGG…PCSRVGHVFR (63 aa)) are catalytic subdomain B. Trp317 contacts substrate. A Mn(2+)-binding site is contributed by His345. Substrate is bound by residues Arg348, His351, and Tyr353. The Ricin B-type lectin domain occupies 428–555 (KEVLPGVIKQ…DAQAQQWQLL (128 aa)).

The protein belongs to the glycosyltransferase 2 family. GalNAc-T subfamily. Mn(2+) is required as a cofactor. In the CNS, it is predominantly expressed in several distinct hypothalamic, thalamic and amygdaloid nuclei. The most abundant level of expression is in the paraventricular, ventromedial and arcuate nuclei of the hypothalamus, the anterodorsal and parafascicular nuclei of the thalamus and the central, basomedial and medial nuclei of the amygdala. Also expressed in cerebral cortex, lateral septum, habenula and hippocampus.

The protein resides in the golgi apparatus membrane. It carries out the reaction L-seryl-[protein] + UDP-N-acetyl-alpha-D-galactosamine = a 3-O-[N-acetyl-alpha-D-galactosaminyl]-L-seryl-[protein] + UDP + H(+). The catalysed reaction is L-threonyl-[protein] + UDP-N-acetyl-alpha-D-galactosamine = a 3-O-[N-acetyl-alpha-D-galactosaminyl]-L-threonyl-[protein] + UDP + H(+). It participates in protein modification; protein glycosylation. Catalyzes the initial reaction in O-linked oligosaccharide biosynthesis, the transfer of an N-acetyl-D-galactosamine residue to a serine or threonine residue on the protein receptor. The polypeptide is Polypeptide N-acetylgalactosaminyltransferase 16 (Galnt16) (Mus musculus (Mouse)).